Consider the following 668-residue polypeptide: Endoplasmic reticulum membrane-associated RNA degradation protein (668 aa).

Helical transmembrane passes span 378–398 (LLAFSVVLLLRFVDEGLLSVF) and 575–595 (VLSLILFLITLELVNVHAVCG).

It is found in the endoplasmic reticulum membrane. Its function is as follows. May play a role in neuronal migration during embryonic development. The chain is Endoplasmic reticulum membrane-associated RNA degradation protein (ERMARD) from Macaca fascicularis (Crab-eating macaque).